Consider the following 233-residue polypeptide: MFRIVKWLIALPVGIFIFFNAYVYGNIITYRAVAPHRTAFMSMRMKQFEQEGRDVALDYRWVPYNRISVNLKKALIASEDAHFAGHGGFDWGGIQNAIRRNRNSGKVKAGGSTISQQLAKNLFLNESRSYIRKGEEAAITAMMEAVTDKDRIFELYLNSIEWHYGVFGAEAASRYFYQIPAAKLTKQQAAKLTARVPAPLYYADHPKSKRLRNKTNIVLRRMGSAELPESDTD.

A helical transmembrane segment spans residues 8-28 (LIALPVGIFIFFNAYVYGNII).

This sequence belongs to the glycosyltransferase 51 family.

It is found in the cell inner membrane. The catalysed reaction is [GlcNAc-(1-&gt;4)-Mur2Ac(oyl-L-Ala-gamma-D-Glu-L-Lys-D-Ala-D-Ala)](n)-di-trans,octa-cis-undecaprenyl diphosphate + beta-D-GlcNAc-(1-&gt;4)-Mur2Ac(oyl-L-Ala-gamma-D-Glu-L-Lys-D-Ala-D-Ala)-di-trans,octa-cis-undecaprenyl diphosphate = [GlcNAc-(1-&gt;4)-Mur2Ac(oyl-L-Ala-gamma-D-Glu-L-Lys-D-Ala-D-Ala)](n+1)-di-trans,octa-cis-undecaprenyl diphosphate + di-trans,octa-cis-undecaprenyl diphosphate + H(+). It functions in the pathway cell wall biogenesis; peptidoglycan biosynthesis. Its function is as follows. Peptidoglycan polymerase that catalyzes glycan chain elongation from lipid-linked precursors. This is Biosynthetic peptidoglycan transglycosylase from Neisseria meningitidis serogroup C / serotype 2a (strain ATCC 700532 / DSM 15464 / FAM18).